Here is a 402-residue protein sequence, read N- to C-terminus: NADH-quinone oxidoreductase subunit D (402 aa).

This sequence belongs to the complex I 49 kDa subunit family. As to quaternary structure, NDH-1 is composed of 14 different subunits. Subunits NuoB, C, D, E, F, and G constitute the peripheral sector of the complex.

It is found in the cell inner membrane. The catalysed reaction is a quinone + NADH + 5 H(+)(in) = a quinol + NAD(+) + 4 H(+)(out). NDH-1 shuttles electrons from NADH, via FMN and iron-sulfur (Fe-S) centers, to quinones in the respiratory chain. The immediate electron acceptor for the enzyme in this species is believed to be ubiquinone. Couples the redox reaction to proton translocation (for every two electrons transferred, four hydrogen ions are translocated across the cytoplasmic membrane), and thus conserves the redox energy in a proton gradient. The protein is NADH-quinone oxidoreductase subunit D of Rhodopseudomonas palustris (strain TIE-1).